Reading from the N-terminus, the 2620-residue chain is Ubiquitin carboxyl-terminal hydrolase 24 (2620 aa).

The 42-residue stretch at 3–44 folds into the UBA domain; the sequence is SEEEQHMTTLLCMGFSDPATIRKALRLAKNDINEAVALLTNE. A disordered region spans residues 45–102; sequence RPGLDYGGYEPMDSGGGPSPGPGGGPRGDGGGDGGGGGPSRGGSTGGGGGFDPPPAYH. Gly residues predominate over residues 58–95; it reads SGGGPSPGPGGGPRGDGGGDGGGGGPSRGGSTGGGGGF. Phosphoserine is present on residues Ser63 and Ser88. Tyr942 bears the Phosphotyrosine mark. Disordered stretches follow at residues 1034–1054 and 1129–1151; these read TSGS…SSSS and TLLS…QQHQ. The segment covering 1131–1151 has biased composition (low complexity); sequence LSESSSQSSKSPSLSSKQQHQ. Residues Ser1141 and Ser1285 each carry the phosphoserine modification. A USP domain is found at 1689–2042; the sequence is VGLRNGGATC…NAYMLFYQRV (354 aa). The active-site Nucleophile is the Cys1698. The interval 1921 to 1945 is disordered; it reads ARQDSSSEVGENGRSVDQGGGGSPR. Ser1943 is modified (phosphoserine). Residue His1970 is the Proton acceptor of the active site. Residues Ser2047, Ser2077, and Ser2561 each carry the phosphoserine modification. The segment at 2063–2090 is disordered; sequence AEDLSLSAPSSPEISPQSSPRPHRPNND. The segment covering 2069–2082 has biased composition (low complexity); that stretch reads SAPSSPEISPQSSP. Thr2565 carries the phosphothreonine modification. Positions 2575 to 2620 are disordered; sequence EKEQSGSSNGSESSPANENGDRHLQQGSESPMMIGELRSDLDDVDP. Residues 2579 to 2592 show a composition bias toward low complexity; sequence SGSSNGSESSPANE. Ser2604 is subject to Phosphoserine. Positions 2611-2620 are enriched in basic and acidic residues; it reads LRSDLDDVDP.

It belongs to the peptidase C19 family. As to quaternary structure, (Microbial infection) Interacts with human cytomegalovirus protein UL38.

It catalyses the reaction Thiol-dependent hydrolysis of ester, thioester, amide, peptide and isopeptide bonds formed by the C-terminal Gly of ubiquitin (a 76-residue protein attached to proteins as an intracellular targeting signal).. Functionally, ubiquitin-specific protease that regulates cell survival in various contexts through modulating the protein stability of some of its substrates including DDB2, MCL1 or TP53. Plays a positive role on ferritinophagy where ferritin is degraded in lysosomes and releases free iron. This chain is Ubiquitin carboxyl-terminal hydrolase 24 (USP24), found in Homo sapiens (Human).